A 188-amino-acid polypeptide reads, in one-letter code: Protein GrpE (188 aa).

Residues 1–10 (MPDPTQNPNV) are compositionally biased toward polar residues. The segment at 1-35 (MPDPTQNPNVTPELEQHAAPEAAAEAAPESSADVM) is disordered. Residues 19–32 (APEAAAEAAPESSA) show a composition bias toward low complexity.

This sequence belongs to the GrpE family. Homodimer.

It localises to the cytoplasm. Functionally, participates actively in the response to hyperosmotic and heat shock by preventing the aggregation of stress-denatured proteins, in association with DnaK and GrpE. It is the nucleotide exchange factor for DnaK and may function as a thermosensor. Unfolded proteins bind initially to DnaJ; upon interaction with the DnaJ-bound protein, DnaK hydrolyzes its bound ATP, resulting in the formation of a stable complex. GrpE releases ADP from DnaK; ATP binding to DnaK triggers the release of the substrate protein, thus completing the reaction cycle. Several rounds of ATP-dependent interactions between DnaJ, DnaK and GrpE are required for fully efficient folding. This chain is Protein GrpE, found in Azoarcus sp. (strain BH72).